The chain runs to 568 residues: Pre-mRNA-processing protein 45 (568 aa).

3 disordered regions span residues 199–232 (EPPK…AQDQ), 281–449 (LNQN…QQKI), and 545–568 (AGKG…RDEE). A compositionally biased stretch (basic and acidic residues) spans 286-364 (KTMRDDIGKR…SRDGDSDRSL (79 aa)). A compositionally biased stretch (low complexity) spans 365-379 (SRSLSASDRSYSRSR). Basic and acidic residues-rich tracts occupy residues 395–419 (RSPE…LERA), 426–440 (ERLE…DLRL), and 557–568 (RDGPVRFVRDEE).

Belongs to the SNW family. In terms of assembly, associated with the spliceosome.

It is found in the nucleus. Functionally, involved in pre-mRNA splicing. The sequence is that of Pre-mRNA-processing protein 45 (PRP45) from Yarrowia lipolytica (strain CLIB 122 / E 150) (Yeast).